Here is a 204-residue protein sequence, read N- to C-terminus: Holliday junction branch migration complex subunit RuvA (204 aa).

The tract at residues 1–67 is domain I; that stretch reads MIDYLYGTLD…GGVISLYGFF (67 aa). Residues 68–149 form a domain II region; sequence TIEEREMYLL…TVNVLNKEKQ (82 aa). The flexible linker stretch occupies residues 150-154; that stretch reads TGAET. Positions 155 to 204 are domain III; that stretch reads IKNTMVSEAIAGLITLGYKMQQARVAVTNVYEHNENITLEDLIKKSLQYL.

It belongs to the RuvA family. As to quaternary structure, homotetramer. Forms an RuvA(8)-RuvB(12)-Holliday junction (HJ) complex. HJ DNA is sandwiched between 2 RuvA tetramers; dsDNA enters through RuvA and exits via RuvB. An RuvB hexamer assembles on each DNA strand where it exits the tetramer. Each RuvB hexamer is contacted by two RuvA subunits (via domain III) on 2 adjacent RuvB subunits; this complex drives branch migration. In the full resolvosome a probable DNA-RuvA(4)-RuvB(12)-RuvC(2) complex forms which resolves the HJ.

It is found in the cytoplasm. The RuvA-RuvB-RuvC complex processes Holliday junction (HJ) DNA during genetic recombination and DNA repair, while the RuvA-RuvB complex plays an important role in the rescue of blocked DNA replication forks via replication fork reversal (RFR). RuvA specifically binds to HJ cruciform DNA, conferring on it an open structure. The RuvB hexamer acts as an ATP-dependent pump, pulling dsDNA into and through the RuvAB complex. HJ branch migration allows RuvC to scan DNA until it finds its consensus sequence, where it cleaves and resolves the cruciform DNA. This is Holliday junction branch migration complex subunit RuvA from Endomicrobium trichonymphae.